A 245-amino-acid polypeptide reads, in one-letter code: Protein virB1 (245 aa).

The N-terminal stretch at 1–28 is a signal peptide; the sequence is MLKATGPLSIILLASTCPSSGAAPLSFA. Positions 176-245 are disordered; sequence LVPPLTARPK…LFDLNQGGPQ (70 aa). Over residues 183–193 the composition is skewed to basic and acidic residues; sequence RPKDDREKPGS.

It belongs to the virb1 family.

Functionally, virB proteins are suggested to act at the bacterial surface and there play an important role in directing T-DNA transfer to plant cells. This Agrobacterium fabrum (strain C58 / ATCC 33970) (Agrobacterium tumefaciens (strain C58)) protein is Protein virB1 (virB1).